Consider the following 209-residue polypeptide: NAD-reducing hydrogenase HoxS subunit delta (209 aa).

Tetramer of an alpha and a gamma subunits (flavin-containing dimer), and a delta and a nickel-containing beta subunits (hydrogenase dimer). The cofactor is [4Fe-4S] cluster. [3Fe-4S] cluster serves as cofactor. [2Fe-2S] cluster is required as a cofactor. Requires FMN as cofactor. It depends on Ni(2+) as a cofactor.

The protein localises to the cytoplasm. The catalysed reaction is H2 + NAD(+) = NADH + H(+). This is NAD-reducing hydrogenase HoxS subunit delta (hoxY) from Cupriavidus necator (strain ATCC 17699 / DSM 428 / KCTC 22496 / NCIMB 10442 / H16 / Stanier 337) (Ralstonia eutropha).